The following is a 326-amino-acid chain: ATP synthase gamma chain (326 aa).

It belongs to the ATPase gamma chain family. As to quaternary structure, F-type ATPases have 2 components, CF(1) - the catalytic core - and CF(0) - the membrane proton channel. CF(1) has five subunits: alpha(3), beta(3), gamma(1), delta(1), epsilon(1). CF(0) has three main subunits: a, b and c.

The protein resides in the cell membrane. In terms of biological role, produces ATP from ADP in the presence of a proton gradient across the membrane. The gamma chain is believed to be important in regulating ATPase activity and the flow of protons through the CF(0) complex. The chain is ATP synthase gamma chain from Corynebacterium efficiens (strain DSM 44549 / YS-314 / AJ 12310 / JCM 11189 / NBRC 100395).